The chain runs to 416 residues: Lipase (416 aa).

A signal peptide spans 1 to 28 (MKCCRIMFVLLGLWFVFGLSVPGGRTEA). Ser-141 (nucleophile) is an active-site residue. Residue Gly-314 coordinates Ca(2+). The active-site Charge relay system is the Asp-345. Asp-385 provides a ligand contact to Ca(2+). His-386 serves as the catalytic Charge relay system. The Ca(2+) site is built by Glu-388, Asp-393, and Pro-394.

The protein belongs to the AB hydrolase superfamily. As to quaternary structure, homodimer.

It localises to the secreted. It carries out the reaction a triacylglycerol + H2O = a diacylglycerol + a fatty acid + H(+). Its activity is regulated as follows. Activity is inhibited by zinc and iron ions, and activated in vitro in 25% v/v DMSO and acetone. Triacylglycerol hydrolase that shows hydrolysis preference towards some of the natural oils such as olive, sunflower and corn oils. In Bacillus sp, this protein is Lipase.